Reading from the N-terminus, the 50-residue chain is U23-theraphotoxin-Cg1a 2 (50 aa).

3 disulfide bridges follow: Cys22–Cys36, Cys29–Cys41, and Cys35–Cys47.

Belongs to the neurotoxin 10 (Hwtx-1) family. 64 (Jztx-20) subfamily. Expressed by the venom gland.

It is found in the secreted. Its function is as follows. Probable ion channel inhibitor. The polypeptide is U23-theraphotoxin-Cg1a 2 (Chilobrachys guangxiensis (Chinese earth tiger tarantula)).